We begin with the raw amino-acid sequence, 426 residues long: Enolase (426 aa).

Q165 contributes to the (2R)-2-phosphoglycerate binding site. Catalysis depends on E209, which acts as the Proton donor. The Mg(2+) site is built by D244, E287, and D313. Residues K338, R367, S368, and K389 each contribute to the (2R)-2-phosphoglycerate site. Catalysis depends on K338, which acts as the Proton acceptor.

The protein belongs to the enolase family. Mg(2+) serves as cofactor.

It localises to the cytoplasm. Its subcellular location is the secreted. The protein localises to the cell surface. It catalyses the reaction (2R)-2-phosphoglycerate = phosphoenolpyruvate + H2O. It participates in carbohydrate degradation; glycolysis; pyruvate from D-glyceraldehyde 3-phosphate: step 4/5. Catalyzes the reversible conversion of 2-phosphoglycerate (2-PG) into phosphoenolpyruvate (PEP). It is essential for the degradation of carbohydrates via glycolysis. In Methanococcus maripaludis (strain C5 / ATCC BAA-1333), this protein is Enolase.